The chain runs to 337 residues: tRNA N6-adenosine threonylcarbamoyltransferase (337 aa).

Fe cation contacts are provided by His111 and His115. Residues 134 to 138, Asp167, Gly180, and Asn272 contribute to the substrate site; that span reads LVSGG. Asp300 serves as a coordination point for Fe cation.

This sequence belongs to the KAE1 / TsaD family. The cofactor is Fe(2+).

Its subcellular location is the cytoplasm. It carries out the reaction L-threonylcarbamoyladenylate + adenosine(37) in tRNA = N(6)-L-threonylcarbamoyladenosine(37) in tRNA + AMP + H(+). Required for the formation of a threonylcarbamoyl group on adenosine at position 37 (t(6)A37) in tRNAs that read codons beginning with adenine. Is involved in the transfer of the threonylcarbamoyl moiety of threonylcarbamoyl-AMP (TC-AMP) to the N6 group of A37, together with TsaE and TsaB. TsaD likely plays a direct catalytic role in this reaction. The chain is tRNA N6-adenosine threonylcarbamoyltransferase from Salmonella agona (strain SL483).